A 371-amino-acid polypeptide reads, in one-letter code: Maltose/maltodextrin import ATP-binding protein MalK (371 aa).

In terms of domain architecture, ABC transporter spans 4-234 (VQLQNVTKAW…PADRFVAGFI (231 aa)). An ATP-binding site is contributed by 36–43 (GPSGCGKS).

Belongs to the ABC transporter superfamily. Maltooligosaccharide importer (TC 3.A.1.1.1) family. As to quaternary structure, the complex is composed of two ATP-binding proteins (MalK), two transmembrane proteins (MalG and MalK) and a solute-binding protein (MalE).

The protein resides in the cell inner membrane. The enzyme catalyses D-maltose(out) + ATP + H2O = D-maltose(in) + ADP + phosphate + H(+). Its function is as follows. Part of the ABC transporter complex MalEFGK involved in maltose/maltodextrin import. Responsible for energy coupling to the transport system. The sequence is that of Maltose/maltodextrin import ATP-binding protein MalK from Shigella flexneri serotype 5b (strain 8401).